Reading from the N-terminus, the 283-residue chain is Protein ATAF2 (283 aa).

In terms of domain architecture, NAC spans 7 to 159 (LPAGFRFHPT…DWVLCRIYNK (153 aa)). Residues 103 to 165 (LGIKKALVFY…IYNKKGTMEK (63 aa)) mediate DNA binding. Residues 171–211 (EKPRTTTMAEQSSSPFDTSDSTYPTLQEDDSSSSGGHGHVV) form a disordered region. Positions 175–195 (TTTMAEQSSSPFDTSDSTYPT) are enriched in polar residues.

Homodimer. Interacts with AHK2. Interacts with AHL12 and AHL27. Interacts with the helicase domain of the tobamovirus (TMV) replicase. Expressed in roots, cotyledons, rosette leaves, cauline leaves and mature flowers. Expressed at low levels in stems and flower buds.

It is found in the nucleus. Its function is as follows. Involved in disease resistance response. May function as repressor of pathogenesis-related proteins. May function in the regulation of host basal defense responses against viral infection. Transcriptional activator involved in responses to wounding and infection with tobamovirus (TMV). Binds to the DNA sequences 5'-AAAATATCT-3' and 5'AGATTTTT-3' of CYP734A1/BAS1 and CYP72C1/SOB7 promoters, respectively. Acts as a suppressor of the brassinosteroid (BR)-inactivating enzymes CYP734A1/BAS1 and CYP72C1/SOB7, and prevents their expression in almost all tissues. Plays a central role in integrating BR homeostasis and seedling development. Regulates the spatial regulation of BR homeostasis and participates in the regulation of hypocotyl elongation and root growth by suppressing BR catabolism. Mediates connection between BR catabolism and photomorphogenesis. Binds to, and transactivates the promoter of the auxin biosynthetic gene NIT2. Stress-responsive NAC transcription factor involved in ABA-inducible leaf senescence signaling. Required for normal seed development and morphology. This Arabidopsis thaliana (Mouse-ear cress) protein is Protein ATAF2 (NAC081).